We begin with the raw amino-acid sequence, 135 residues long: Small ribosomal subunit protein bS16 (135 aa).

The disordered stretch occupies residues 94 to 135; that stretch reads IGTEMETWQQRNDSRLKRGLDRKAIRRKRKKEAEAKEKESAG. Basic and acidic residues-rich tracts occupy residues 105–116 and 124–135; these read NDSRLKRGLDRK and KEAEAKEKESAG.

The protein belongs to the bacterial ribosomal protein bS16 family.

The protein is Small ribosomal subunit protein bS16 of Chloroherpeton thalassium (strain ATCC 35110 / GB-78).